The primary structure comprises 102 residues: UPF0235 protein Noc_3000 (102 aa).

It belongs to the UPF0235 family.

This chain is UPF0235 protein Noc_3000, found in Nitrosococcus oceani (strain ATCC 19707 / BCRC 17464 / JCM 30415 / NCIMB 11848 / C-107).